Here is a 684-residue protein sequence, read N- to C-terminus: Threonine--tRNA ligase (684 aa).

A TGS domain is found at 1-66; that stretch reads MSTAASPAPA…DADVEVVPVP (66 aa). The interval 261–567 is catalytic; sequence DHRKLGVELD…LTEHYAGAFP (307 aa). Zn(2+)-binding residues include C366, H417, and H544.

It belongs to the class-II aminoacyl-tRNA synthetase family. In terms of assembly, homodimer. Zn(2+) serves as cofactor.

The protein localises to the cytoplasm. It catalyses the reaction tRNA(Thr) + L-threonine + ATP = L-threonyl-tRNA(Thr) + AMP + diphosphate + H(+). Functionally, catalyzes the attachment of threonine to tRNA(Thr) in a two-step reaction: L-threonine is first activated by ATP to form Thr-AMP and then transferred to the acceptor end of tRNA(Thr). Also edits incorrectly charged L-seryl-tRNA(Thr). This chain is Threonine--tRNA ligase, found in Mycobacterium sp. (strain KMS).